Reading from the N-terminus, the 211-residue chain is Thymidylate kinase (211 aa).

11 to 18 contributes to the ATP binding site; it reads GPDGAGKT.

This sequence belongs to the thymidylate kinase family.

It catalyses the reaction dTMP + ATP = dTDP + ADP. Its function is as follows. Phosphorylation of dTMP to form dTDP in both de novo and salvage pathways of dTTP synthesis. This chain is Thymidylate kinase, found in Streptococcus pyogenes serotype M49 (strain NZ131).